The chain runs to 128 residues: NHP2-like protein 1 (128 aa).

M1 is subject to N-acetylmethionine. Residue T2 is modified to N-acetylthreonine; in NHP2-like protein 1, N-terminally processed. K21 bears the N6-acetyllysine mark. The segment at 36–48 (RKGANEATKTLNR) is interaction with U4 snRNA and U4atac snRNA. The segment at 96-128 (SRPVIACSVTIKEGSQLKQQIQSIQQSIERLLV) is important for U4 snRNA-binding. A Phosphoserine modification is found at S122.

Belongs to the eukaryotic ribosomal protein eL8 family. Identified in the spliceosome B complex. Component of the U4/U6-U5 tri-snRNP complex composed of the U4, U6 and U5 snRNAs and at least PRPF3, PRPF4, PRPF6, PRPF8, PRPF31, SNRNP200, TXNL4A, WDR57, SNRNP40, DDX23, CD2BP2, PPIH, NHP2L1, EFTUD2, SART1 and USP39. Interacts with RAD17 and PRPF31. The complex formed by SNU13 and PRPF31 binds U4 snRNA. The complex formed by SNU13 and PRPF31 also binds U4atac snRNA, a characteristic component of specific, less abundant spliceosomal complexes. Part of the small subunit (SSU) processome, composed of more than 70 proteins and the RNA chaperone small nucleolar RNA (snoRNA) U3. Core component of box C/D small nucleolar ribonucleoprotein (snoRNP) particles; the core proteins SNU13, NOP56, NOP58 and FBL or FBLL1 assemble stepwise onto the snoRNA.

It localises to the nucleus. Its subcellular location is the nucleolus. Functionally, part of the small subunit (SSU) processome, first precursor of the small eukaryotic ribosomal subunit. During the assembly of the SSU processome in the nucleolus, many ribosome biogenesis factors, an RNA chaperone and ribosomal proteins associate with the nascent pre-rRNA and work in concert to generate RNA folding, modifications, rearrangements and cleavage as well as targeted degradation of pre-ribosomal RNA by the RNA exosome. Involved in pre-mRNA splicing as component of the spliceosome. Binds to the 5'-stem-loop of U4 snRNA and thereby contributes to spliceosome assembly. The protein undergoes a conformational change upon RNA-binding. Core component of box C/D small nucleolar ribonucleoprotein (snoRNP) complexes that function in methylation of multiple sites on ribosomal RNAs (rRNAs) and messenger RNAs (mRNAs). The sequence is that of NHP2-like protein 1 from Bos taurus (Bovine).